The following is a 308-amino-acid chain: GTP cyclohydrolase MptA (308 aa).

Residues Asn282–Ala308 form a disordered region.

The protein belongs to the GTP cyclohydrolase IV family. Homodimer. Requires Fe(2+) as cofactor.

The enzyme catalyses GTP + H2O = 7,8-dihydroneopterin 2',3'-cyclic phosphate + formate + diphosphate + H(+). It functions in the pathway cofactor biosynthesis; 5,6,7,8-tetrahydromethanopterin biosynthesis. Functionally, converts GTP to 7,8-dihydro-D-neopterin 2',3'-cyclic phosphate, the first intermediate in the biosynthesis of coenzyme methanopterin. Involved in archaeosine (G(+)) and folate biosynthesis. The polypeptide is GTP cyclohydrolase MptA (Haloferax volcanii (strain ATCC 29605 / DSM 3757 / JCM 8879 / NBRC 14742 / NCIMB 2012 / VKM B-1768 / DS2) (Halobacterium volcanii)).